Here is a 360-residue protein sequence, read N- to C-terminus: UDP-3-O-acylglucosamine N-acyltransferase (360 aa).

Histidine 248 functions as the Proton acceptor in the catalytic mechanism.

This sequence belongs to the transferase hexapeptide repeat family. LpxD subfamily. As to quaternary structure, homotrimer.

It carries out the reaction a UDP-3-O-[(3R)-3-hydroxyacyl]-alpha-D-glucosamine + a (3R)-hydroxyacyl-[ACP] = a UDP-2-N,3-O-bis[(3R)-3-hydroxyacyl]-alpha-D-glucosamine + holo-[ACP] + H(+). Its pathway is bacterial outer membrane biogenesis; LPS lipid A biosynthesis. Functionally, catalyzes the N-acylation of UDP-3-O-acylglucosamine using 3-hydroxyacyl-ACP as the acyl donor. Is involved in the biosynthesis of lipid A, a phosphorylated glycolipid that anchors the lipopolysaccharide to the outer membrane of the cell. The chain is UDP-3-O-acylglucosamine N-acyltransferase from Chlamydia pneumoniae (Chlamydophila pneumoniae).